A 321-amino-acid chain; its full sequence is Endochitinase 33 (321 aa).

An N-terminal signal peptide occupies residues 1-19 (MPSLTALASLLALVPSALA). The region spanning 27 to 321 (QNIAVYWGQN…FETQVVNALR (295 aa)) is the GH18 domain. The active-site Proton donor is the Glu-167.

This sequence belongs to the glycosyl hydrolase 18 family. Chitinase class III subfamily. Monomer.

Its subcellular location is the secreted. It carries out the reaction Random endo-hydrolysis of N-acetyl-beta-D-glucosaminide (1-&gt;4)-beta-linkages in chitin and chitodextrins.. In terms of biological role, secreted chitinase involved in the degradation of chitin, a component of the cell walls of fungi and exoskeletal elements of some animals (including worms and arthropods). Plays a morphogenetic role during apical growth, cell division and differentiation (cell wall morphogenesis). May be involved in the degradation and further assimilation of phytopathogenic fungi, namely mycoparasitism, the major mechanism accounting for the antagonistic activity against phytopathogenic fungi displayed by Trichoderma. This chain is Endochitinase 33 (chit33), found in Trichoderma harzianum (Hypocrea lixii).